We begin with the raw amino-acid sequence, 230 residues long: Ribose-5-phosphate isomerase A (230 aa).

Substrate-binding positions include 31-34 (TGST), 87-90 (DGAD), and 100-103 (KGGG). Catalysis depends on Glu-109, which acts as the Proton acceptor. Lys-127 lines the substrate pocket.

It belongs to the ribose 5-phosphate isomerase family. Homodimer.

The enzyme catalyses aldehydo-D-ribose 5-phosphate = D-ribulose 5-phosphate. The protein operates within carbohydrate degradation; pentose phosphate pathway; D-ribose 5-phosphate from D-ribulose 5-phosphate (non-oxidative stage): step 1/1. In terms of biological role, catalyzes the reversible conversion of ribose-5-phosphate to ribulose 5-phosphate. This Lactobacillus delbrueckii subsp. bulgaricus (strain ATCC 11842 / DSM 20081 / BCRC 10696 / JCM 1002 / NBRC 13953 / NCIMB 11778 / NCTC 12712 / WDCM 00102 / Lb 14) protein is Ribose-5-phosphate isomerase A.